The sequence spans 144 residues: Putative pre-16S rRNA nuclease (144 aa).

The protein belongs to the YqgF nuclease family.

The protein localises to the cytoplasm. Functionally, could be a nuclease involved in processing of the 5'-end of pre-16S rRNA. The protein is Putative pre-16S rRNA nuclease of Lactiplantibacillus plantarum (strain ATCC BAA-793 / NCIMB 8826 / WCFS1) (Lactobacillus plantarum).